The sequence spans 100 residues: Urease subunit gamma (100 aa).

The protein belongs to the urease gamma subunit family. As to quaternary structure, heterotrimer of UreA (gamma), UreB (beta) and UreC (alpha) subunits. Three heterotrimers associate to form the active enzyme.

Its subcellular location is the cytoplasm. It carries out the reaction urea + 2 H2O + H(+) = hydrogencarbonate + 2 NH4(+). It functions in the pathway nitrogen metabolism; urea degradation; CO(2) and NH(3) from urea (urease route): step 1/1. The chain is Urease subunit gamma from Prochlorococcus marinus (strain MIT 9301).